Here is a 398-residue protein sequence, read N- to C-terminus: Small ribosomal subunit protein mS29 (398 aa).

Residues 1 to 21 constitute a mitochondrion transit peptide; sequence MMLKGITRLISRIHKLDPGRF. Residues 39 to 67 are disordered; it reads QVPVESPRAISRTNENDPAKHGDQHEGQH. Residues 52-66 are compositionally biased toward basic and acidic residues; that stretch reads NENDPAKHGDQHEGQ. GTP-binding positions include M100 and 128–135; that span reads GEKGTGKT. K175 and K207 each carry N6-acetyllysine.

The protein belongs to the mitochondrion-specific ribosomal protein mS29 family. As to quaternary structure, component of the mitochondrial small ribosomal subunit (mt-SSU). Mature mammalian 55S mitochondrial ribosomes consist of a small (28S) and a large (39S) subunit. The 28S small subunit contains a 12S ribosomal RNA (12S mt-rRNA) and 30 different proteins. The 39S large subunit contains a 16S rRNA (16S mt-rRNA), a copy of mitochondrial valine transfer RNA (mt-tRNA(Val)), which plays an integral structural role, and 52 different proteins. Interacts with DELE1. Interacts with NOA1. Ubiquitous.

It is found in the mitochondrion. The catalysed reaction is GTP + H2O = GDP + phosphate + H(+). Functionally, as a component of the mitochondrial small ribosomal subunit, it plays a role in the translation of mitochondrial mRNAs. Involved in mediating interferon-gamma-induced cell death. Displays GTPase activity in vitro. The polypeptide is Small ribosomal subunit protein mS29 (Homo sapiens (Human)).